Consider the following 370-residue polypeptide: Subtilisin-like protease (370 aa).

Residues 1–17 (MIASIVFFIVLVDGVAT) form the signal peptide. Active-site charge relay system residues include Asp-13, His-35, and Ser-190. The Peptidase S8 domain maps to 18 to 261 (GSPNALVTDF…FGEVSPSRLE (244 aa)). Residues 240-370 (RVTDRWTHRN…TTEGTCHGIR (131 aa)) enclose the P/Homo B domain.

The protein belongs to the peptidase S8 family.

The protein is Subtilisin-like protease (ORF47) of Ictalurid herpesvirus 1 (strain Auburn) (IcHV-1).